A 135-amino-acid chain; its full sequence is MQKTLALVAHDHKKPELIRWSLEHKAELEKHNLVATGTTGGLLQEALNLPVTRYKSGPLGGDQQIGALIAEGKLDALIFFWDPLNPAPHDPDVKALLRLCSVWNLPVACNTSTADMLITSPLFIEGLYERAVPEF.

Positions 1 to 135 (MQKTLALVAH…GLYERAVPEF (135 aa)) constitute an MGS-like domain. Residues His10, Lys14, 36-39 (TGTT), and 56-57 (SG) contribute to the substrate site. The active-site Proton donor/acceptor is Asp62. His89 serves as a coordination point for substrate.

It belongs to the methylglyoxal synthase family.

It catalyses the reaction dihydroxyacetone phosphate = methylglyoxal + phosphate. Functionally, catalyzes the formation of methylglyoxal from dihydroxyacetone phosphate. In Pseudoalteromonas atlantica (strain T6c / ATCC BAA-1087), this protein is Methylglyoxal synthase.